Here is a 70-residue protein sequence, read N- to C-terminus: NADH dehydrogenase [ubiquinone] 1 alpha subcomplex subunit 1 (70 aa).

The chain crosses the membrane as a helical span at residues 1 to 21; that stretch reads MWFEILPGLSVMGVCLLIPGL.

It belongs to the complex I NDUFA1 subunit family. As to quaternary structure, complex I is composed of 45 different subunits. As to expression, primarily expressed in heart and skeletal muscle.

Its subcellular location is the mitochondrion inner membrane. Functionally, accessory subunit of the mitochondrial membrane respiratory chain NADH dehydrogenase (Complex I), that is believed not to be involved in catalysis. Complex I functions in the transfer of electrons from NADH to the respiratory chain. The immediate electron acceptor for the enzyme is believed to be ubiquinone. This Homo sapiens (Human) protein is NADH dehydrogenase [ubiquinone] 1 alpha subcomplex subunit 1 (NDUFA1).